Consider the following 499-residue polypeptide: Ent-kaurenoic acid oxidase 1 (499 aa).

Residues 5–25 form a helical membrane-spanning segment; it reads AWWAVAAVVAALAVVALDAAV. Cysteine 443 contributes to the heme binding site.

The protein belongs to the cytochrome P450 family. It depends on heme as a cofactor.

The protein resides in the endoplasmic reticulum membrane. The enzyme catalyses ent-kaur-16-en-19-oate + 3 reduced [NADPH--hemoprotein reductase] + 3 O2 = gibberellin A12 + 3 oxidized [NADPH--hemoprotein reductase] + 4 H2O + 4 H(+). The catalysed reaction is ent-kaur-16-en-19-oate + reduced [NADPH--hemoprotein reductase] + O2 = ent-7alpha-hydroxykaur-16-en-19-oate + oxidized [NADPH--hemoprotein reductase] + H2O + H(+). It catalyses the reaction ent-7alpha-hydroxykaur-16-en-19-oate + reduced [NADPH--hemoprotein reductase] + O2 = gibberellin A12 aldehyde + oxidized [NADPH--hemoprotein reductase] + 2 H2O + H(+). It carries out the reaction gibberellin A12 aldehyde + reduced [NADPH--hemoprotein reductase] + O2 = gibberellin A12 + oxidized [NADPH--hemoprotein reductase] + H2O + 2 H(+). Its pathway is plant hormone biosynthesis; gibberellin biosynthesis. Catalyzes three successive oxidations of ent-kaurenoic acid giving gibberellin 12 (GA12), a key step in gibberellins (GAs) biosynthesis. GAs, which are involved many processes, including stem elongation, play a central role in plant development. In Hordeum vulgare (Barley), this protein is Ent-kaurenoic acid oxidase 1.